The following is a 380-amino-acid chain: Cell division protein FtsZ (380 aa).

Residues 27 to 31 (GAGNN), 119 to 121 (GTG), Glu-150, and Asn-189 contribute to the GTP site.

This sequence belongs to the FtsZ family. In terms of assembly, homodimer. Polymerizes to form a dynamic ring structure in a strictly GTP-dependent manner. Interacts directly with several other division proteins.

Its subcellular location is the cytoplasm. Functionally, essential cell division protein that forms a contractile ring structure (Z ring) at the future cell division site. The regulation of the ring assembly controls the timing and the location of cell division. One of the functions of the FtsZ ring is to recruit other cell division proteins to the septum to produce a new cell wall between the dividing cells. Binds GTP and shows GTPase activity. This chain is Cell division protein FtsZ, found in Mycoplasma pneumoniae (strain ATCC 29342 / M129 / Subtype 1) (Mycoplasmoides pneumoniae).